The following is a 282-amino-acid chain: Pantothenate synthetase (282 aa).

ATP is bound at residue 30-37; sequence MGYLHEGH. His37 serves as the catalytic Proton donor. A (R)-pantoate-binding site is contributed by Gln61. Gln61 contacts beta-alanine. An ATP-binding site is contributed by 147–150; that stretch reads GMKD. Gln153 lines the (R)-pantoate pocket. Residues Val176 and 184–187 each bind ATP; that span reads KSSR.

Belongs to the pantothenate synthetase family. As to quaternary structure, homodimer.

It localises to the cytoplasm. The catalysed reaction is (R)-pantoate + beta-alanine + ATP = (R)-pantothenate + AMP + diphosphate + H(+). It functions in the pathway cofactor biosynthesis; (R)-pantothenate biosynthesis; (R)-pantothenate from (R)-pantoate and beta-alanine: step 1/1. In terms of biological role, catalyzes the condensation of pantoate with beta-alanine in an ATP-dependent reaction via a pantoyl-adenylate intermediate. The polypeptide is Pantothenate synthetase (Bacillus cytotoxicus (strain DSM 22905 / CIP 110041 / 391-98 / NVH 391-98)).